Here is an 85-residue protein sequence, read N- to C-terminus: ATP synthase subunit c (85 aa).

The next 2 helical transmembrane spans lie at 22 to 39 (AIGA…IGKI) and 65 to 85 (AALI…VFFL).

This sequence belongs to the ATPase C chain family. F-type ATPases have 2 components, F(1) - the catalytic core - and F(0) - the membrane proton channel. F(1) has five subunits: alpha(3), beta(3), gamma(1), delta(1), epsilon(1). F(0) has three main subunits: a(1), b(2) and c(10-14). The alpha and beta chains form an alternating ring which encloses part of the gamma chain. F(1) is attached to F(0) by a central stalk formed by the gamma and epsilon chains, while a peripheral stalk is formed by the delta and b chains.

Its subcellular location is the cell inner membrane. Its function is as follows. F(1)F(0) ATP synthase produces ATP from ADP in the presence of a proton or sodium gradient. F-type ATPases consist of two structural domains, F(1) containing the extramembraneous catalytic core and F(0) containing the membrane proton channel, linked together by a central stalk and a peripheral stalk. During catalysis, ATP synthesis in the catalytic domain of F(1) is coupled via a rotary mechanism of the central stalk subunits to proton translocation. Functionally, key component of the F(0) channel; it plays a direct role in translocation across the membrane. A homomeric c-ring of between 10-14 subunits forms the central stalk rotor element with the F(1) delta and epsilon subunits. This is ATP synthase subunit c from Bacteroides thetaiotaomicron (strain ATCC 29148 / DSM 2079 / JCM 5827 / CCUG 10774 / NCTC 10582 / VPI-5482 / E50).